Here is a 184-residue protein sequence, read N- to C-terminus: Translation initiation factor IF-3 (184 aa).

The protein belongs to the IF-3 family. As to quaternary structure, monomer.

Its subcellular location is the cytoplasm. IF-3 binds to the 30S ribosomal subunit and shifts the equilibrium between 70S ribosomes and their 50S and 30S subunits in favor of the free subunits, thus enhancing the availability of 30S subunits on which protein synthesis initiation begins. The polypeptide is Translation initiation factor IF-3 (Mycoplasma genitalium (strain ATCC 33530 / DSM 19775 / NCTC 10195 / G37) (Mycoplasmoides genitalium)).